The sequence spans 371 residues: 2-oxoadipate dioxygenase/decarboxylase, chloroplastic (371 aa).

The N-terminal 50 residues, 1-50 (MISLHSSAIKASLYGSFPSSLRSTLSVSFSAGSLIRLPSVGKRNLSVVVS), are a transit peptide targeting the chloroplast. 2 residues coordinate 2-oxoadipate: His113 and Arg117. His113 provides a ligand contact to Fe(2+). Residue His250 participates in Fe(2+) binding. Residues Gln296 and Tyr320 each coordinate 2-oxoadipate. Glu322 lines the Fe(2+) pocket.

It belongs to the 2-oxoadipate dioxygenase/decarboxylase family. Requires Fe(2+) as cofactor.

It is found in the plastid. It localises to the chloroplast. It catalyses the reaction 2-oxoadipate + O2 = (R)-2-hydroxyglutarate + CO2. It participates in amino-acid degradation. In terms of biological role, catalyzes the decarboxylation and hydroxylation of 2-oxoadipate (2OA) to form D-2-hydroxyglutarate (D-2-HGA). Is involved in a D-lysine catabolic pathway. This Arabidopsis thaliana (Mouse-ear cress) protein is 2-oxoadipate dioxygenase/decarboxylase, chloroplastic.